The following is an 895-amino-acid chain: Zyg eleven-related protein 1 (895 aa).

2 disordered regions span residues 58-78 (HGPA…PDQG) and 195-221 (RGQM…SDHQ). Positions 205–220 (SPLSPSSQPSSIQSDH) are enriched in low complexity.

Interacts with elc-1. Part of an E3 ubiquitin ligase complex including zer-11, cul-2 and elc-1.

Acts as a target recruitment subunit in the E3 ubiquitin ligase complex zer-1-cul-2-elc-1. This is Zyg eleven-related protein 1 (zer-1) from Caenorhabditis elegans.